Consider the following 704-residue polypeptide: Elongation factor G (704 aa).

The tr-type G domain maps to 10–290 (NKVRNIGIMA…AVIDYLPSPL (281 aa)). GTP-binding positions include 19 to 26 (AHIDAGKT), 83 to 87 (DTPGH), and 137 to 140 (NKMD).

This sequence belongs to the TRAFAC class translation factor GTPase superfamily. Classic translation factor GTPase family. EF-G/EF-2 subfamily.

Its subcellular location is the cytoplasm. In terms of biological role, catalyzes the GTP-dependent ribosomal translocation step during translation elongation. During this step, the ribosome changes from the pre-translocational (PRE) to the post-translocational (POST) state as the newly formed A-site-bound peptidyl-tRNA and P-site-bound deacylated tRNA move to the P and E sites, respectively. Catalyzes the coordinated movement of the two tRNA molecules, the mRNA and conformational changes in the ribosome. This Clavibacter michiganensis subsp. michiganensis (strain NCPPB 382) protein is Elongation factor G.